A 948-amino-acid polypeptide reads, in one-letter code: Insulin receptor substrate 1 (948 aa).

Residues 8–109 (GMALSGYLKK…WLDKLLVLQR (102 aa)) form the PH domain. Positions 122–236 (YDQVWQVVIQ…SAMSAKTESN (115 aa)) constitute an IRS-type PTB domain. Residues 247–270 (PDLSHEPMRKRSSSANEASKPINV) are disordered. Phosphoserine occurs at positions 286 and 287. Residues 304–329 (RNGTLSESSNQTYFGSNHGLRSNTIS) show a composition bias toward polar residues. Positions 304-373 (RNGTLSESSN…SDDNGSFSHY (70 aa)) are disordered. At Ser-342 the chain carries Phosphoserine. Tyr-410 is modified (phosphotyrosine; by INSR). The YXXM motif 1 signature appears at 410–413 (YIPM). The interval 528–559 (ANRSQSSITKEGTSYSTSSNRQKKSTSAPLLS) is disordered. A compositionally biased stretch (polar residues) spans 529–556 (NRSQSSITKEGTSYSTSSNRQKKSTSAP). Ser-554 bears the Phosphoserine mark. The short motif at 640–643 (YLEM) is the YXXM motif 2 element. Residues 703–734 (EKKSNSPLNETPCSLKPTDVESNSHDEHSTNN) form a disordered region. Positions 720-731 (TDVESNSHDEHS) are enriched in basic and acidic residues. Position 891 is a phosphotyrosine; by INSR (Tyr-891). A disordered region spans residues 907–948 (YLKRGSRESPPVSACPGDGNTYAKIDFDQSDSSSSSSNIFNT). Ser-912 and Ser-915 each carry phosphoserine. Tyr-928 bears the Phosphotyrosine; by INSR mark. Over residues 936–948 (SDSSSSSSNIFNT) the composition is skewed to low complexity.

As to quaternary structure, bindings to phosphatidylinositol 3-kinase and SHP2.

In terms of biological role, activates phosphatidylinositol 3-kinase when bound to the regulatory p85 subunit. May mediate the control of various cellular processes by insulin-like peptides. When phosphorylated by the insulin receptor binds specifically to various cellular proteins containing SH2 domains. Involved in control of cell proliferation, cell size, and body and organ growth throughout development. Also has a role in a signaling pathway controlling the physiological response required to endure periods of low nutrient conditions. Insulin/insulin-like growth factor (IGF) signaling pathway has a role in regulating aging and is necessary in the ovary for vitellogenic maturation. This is Insulin receptor substrate 1 from Drosophila erecta (Fruit fly).